The chain runs to 413 residues: Serine hydroxymethyltransferase (413 aa).

Residues leucine 119 and 123–125 (GHL) contribute to the (6S)-5,6,7,8-tetrahydrofolate site. Residue lysine 228 is modified to N6-(pyridoxal phosphate)lysine. 351-353 (SPF) serves as a coordination point for (6S)-5,6,7,8-tetrahydrofolate.

The protein belongs to the SHMT family. In terms of assembly, homodimer. Pyridoxal 5'-phosphate serves as cofactor.

It is found in the cytoplasm. The catalysed reaction is (6R)-5,10-methylene-5,6,7,8-tetrahydrofolate + glycine + H2O = (6S)-5,6,7,8-tetrahydrofolate + L-serine. It participates in one-carbon metabolism; tetrahydrofolate interconversion. Its pathway is amino-acid biosynthesis; glycine biosynthesis; glycine from L-serine: step 1/1. In terms of biological role, catalyzes the reversible interconversion of serine and glycine with tetrahydrofolate (THF) serving as the one-carbon carrier. This reaction serves as the major source of one-carbon groups required for the biosynthesis of purines, thymidylate, methionine, and other important biomolecules. Also exhibits THF-independent aldolase activity toward beta-hydroxyamino acids, producing glycine and aldehydes, via a retro-aldol mechanism. This is Serine hydroxymethyltransferase from Clostridium botulinum (strain 657 / Type Ba4).